Consider the following 607-residue polypeptide: MPRKKPFSVKQKKKQLQDKRERKRGLQDGLRSSSNSRSGSRERREEQTDTSDGESVTHHIRRLNQQPSQGLGPRGYDPNRYRLHFERDSREEVERRKRAAREQVLQPVSAEMLELDIQEVYQPGSVLDFPRRPPWSYEMSKEQLMSQEERSFQEYLGKIHGAYTSEKLSYFEHNLETWRQLWRVLEMSDIVLLITDIRHPVVNFPPALYEYVTGELGLALVLVLNKVDLAPPALVVAWKHYFHQHYPQLHIVLFTSFPRDTRTPQEPGSVLKKSRRRGRGWTRALGPEQLLRACEAITVGKVDLSSWREKIARDVAGASWGNVSGEEEEEEDGPAVLVEQQTDSAMEPTGPSRERYKDGVVTIGCVGFPNVGKSSLINGLVGRKVVSVSRTPGHTRYFQTYFLTPSVKLCDCPGLIFPSLLPRQLQVLAGIYPIAQIQEPYTSVGYLACRIPVQALLHLRHPEAEDPSAEHPWCAWDVCEAWAEKRGYKTAKAARNDVYRAANSLLRLAVDGRLSLCFHPPGYSEQRGTWESHAETAELVLSQGRVGPAGDEEEEEEEELSSSCEEEGEEDRDADEEGEGDEDTPTSDTGSCLAARNPYALLGEGEC.

Residues 1–14 show a composition bias toward basic residues; sequence MPRKKPFSVKQKKK. The interval 1 to 81 is disordered; sequence MPRKKPFSVK…GPRGYDPNRY (81 aa). A compositionally biased stretch (basic and acidic residues) spans 15–26; it reads QLQDKRERKRGL. 3 positions are modified to phosphoserine: serine 32, serine 33, and serine 34. 2 positions are modified to phosphothreonine: threonine 48 and threonine 50. Serine 51 and serine 68 each carry phosphoserine. The CP-type G domain occupies 178–418; the sequence is WRQLWRVLEM…LCDCPGLIFP (241 aa). GTP is bound at residue 225 to 228; the sequence is NKVD. At serine 324 the chain carries Phosphoserine. Residues 367 to 374 and 411 to 415 contribute to the GTP site; these read GFPNVGKS and DCPGL. A disordered region spans residues 544 to 607; that stretch reads GRVGPAGDEE…PYALLGEGEC (64 aa). Over residues 550-585 the composition is skewed to acidic residues; the sequence is GDEEEEEEEELSSSCEEEGEEDRDADEEGEGDEDTP. Phosphoserine is present on residues serine 561, serine 562, and serine 563.

This sequence belongs to the TRAFAC class YlqF/YawG GTPase family.

Possible regulatory or functional link with the histocompatibility cluster. The polypeptide is Guanine nucleotide-binding protein-like 1 (Gnl1) (Rattus norvegicus (Rat)).